We begin with the raw amino-acid sequence, 493 residues long: Ribulose bisphosphate carboxylase large chain (493 aa).

Residues Asn-132 and Thr-182 each coordinate substrate. Residue Lys-184 is the Proton acceptor of the active site. Residue Lys-186 coordinates substrate. Mg(2+)-binding residues include Lys-210, Asp-212, and Glu-213. The residue at position 210 (Lys-210) is an N6-carboxylysine. His-302 functions as the Proton acceptor in the catalytic mechanism. Substrate contacts are provided by Arg-303, His-335, and Ser-387.

The protein belongs to the RuBisCO large chain family. Type I subfamily. Heterohexadecamer of 8 large chains and 8 small chains. Mg(2+) is required as a cofactor.

The catalysed reaction is 2 (2R)-3-phosphoglycerate + 2 H(+) = D-ribulose 1,5-bisphosphate + CO2 + H2O. It carries out the reaction D-ribulose 1,5-bisphosphate + O2 = 2-phosphoglycolate + (2R)-3-phosphoglycerate + 2 H(+). Functionally, ruBisCO catalyzes two reactions: the carboxylation of D-ribulose 1,5-bisphosphate, the primary event in carbon dioxide fixation, as well as the oxidative fragmentation of the pentose substrate. Both reactions occur simultaneously and in competition at the same active site. The sequence is that of Ribulose bisphosphate carboxylase large chain from Acidiphilium cryptum (strain JF-5).